Here is a 416-residue protein sequence, read N- to C-terminus: Serine hydroxymethyltransferase (416 aa).

Residues L121 and 125 to 127 (GHL) each bind (6S)-5,6,7,8-tetrahydrofolate. N6-(pyridoxal phosphate)lysine is present on K229.

The protein belongs to the SHMT family. As to quaternary structure, homodimer. Pyridoxal 5'-phosphate is required as a cofactor.

The protein resides in the cytoplasm. It carries out the reaction (6R)-5,10-methylene-5,6,7,8-tetrahydrofolate + glycine + H2O = (6S)-5,6,7,8-tetrahydrofolate + L-serine. It functions in the pathway one-carbon metabolism; tetrahydrofolate interconversion. It participates in amino-acid biosynthesis; glycine biosynthesis; glycine from L-serine: step 1/1. In terms of biological role, catalyzes the reversible interconversion of serine and glycine with tetrahydrofolate (THF) serving as the one-carbon carrier. This reaction serves as the major source of one-carbon groups required for the biosynthesis of purines, thymidylate, methionine, and other important biomolecules. Also exhibits THF-independent aldolase activity toward beta-hydroxyamino acids, producing glycine and aldehydes, via a retro-aldol mechanism. This chain is Serine hydroxymethyltransferase, found in Neisseria meningitidis serogroup C / serotype 2a (strain ATCC 700532 / DSM 15464 / FAM18).